The primary structure comprises 531 residues: Achacin (531 aa).

Positions 1–22 (MLLLNSALFILCLVCWLPGTSS) are cleaved as a signal peptide. The propeptide occupies 23–29 (SRVLTRR). 4 N-linked (GlcNAc...) asparagine glycosylation sites follow: Asn-112, Asn-150, Asn-308, and Asn-392.

This sequence to A.kurodai aplysianin-A. In terms of assembly, homodimer. In terms of tissue distribution, collar tissue.

In terms of biological role, antibacterial glycoprotein. This chain is Achacin, found in Lissachatina fulica (Giant African land snail).